Consider the following 108-residue polypeptide: Parvalbumin beta (108 aa).

The residue at position 1 (A1) is an N-acetylalanine. Cysteines 11 and 33 form a disulfide. EF-hand domains follow at residues 38-73 and 77-108; these read KSAD…FKAG and LTDA…LVKA. Residues D51, D53, S55, F57, E59, E62, D90, D92, D94, A96, and E101 each contribute to the Ca(2+) site.

It belongs to the parvalbumin family.

Functionally, in muscle, parvalbumin is thought to be involved in relaxation after contraction. It binds two calcium ions. The chain is Parvalbumin beta from Merlangius merlangus (Whiting).